The chain runs to 199 residues: Transgelin-2 (199 aa).

A2 is subject to N-acetylalanine. Residue S11 is modified to Phosphoserine. K17 and K20 each carry N6-acetyllysine. A Calponin-homology (CH) domain is found at 24 to 136 (ADLEQILIQW…RTLMNLGGLA (113 aa)). Phosphoserine is present on S163. K171 is covalently cross-linked (Glycyl lysine isopeptide (Lys-Gly) (interchain with G-Cter in SUMO2)). A Calponin-like repeat occupies 174 to 199 (IGLQMGTNRGASQAGMTGYGMPRQIL). At T180 the chain carries Phosphothreonine. Residues R182 and R196 each carry the omega-N-methylarginine modification.

This sequence belongs to the calponin family.

In Bos taurus (Bovine), this protein is Transgelin-2 (TAGLN2).